The primary structure comprises 948 residues: Puromycin-sensitive aminopeptidase (948 aa).

Residues glutamate 206 and 341–345 contribute to the substrate site; that span reads GAMEN. Histidine 377 contacts Zn(2+). Glutamate 378 (proton acceptor) is an active-site residue. Histidine 381 and glutamate 400 together coordinate Zn(2+).

This sequence belongs to the peptidase M1 family. It depends on Zn(2+) as a cofactor. As to expression, expressed mainly in intestinal cells in the posterior part of the intestine and in amphid sensory neurons and nerve ring neurons. Expressed in neurons in the male tail. Expressed in mature spermatids (at protein level).

Its subcellular location is the cytoplasm. It localises to the cell cortex. The protein localises to the chromosome. It is found in the cytoskeleton. The protein resides in the spindle pole. The catalysed reaction is Release of an N-terminal amino acid, preferentially alanine, from a wide range of peptides, amides and arylamides.. Its activity is regulated as follows. Inhibited by chelating agent 1,10-phenanthroline, aminopeptidase inhibitors actinonin, amastatin, and leuhistin, and to a lesser extent by puromycin. Functionally, aminopeptidase. Required for the exit from meiosis, probably upstream of cyclin cyb-3. Involved in the establishment of the anterior-posterior polarity at the embryonic 1-cell stage by regulating the dynamics of sperm-donated centrosomes. Plays a role in oocyte maturation. Required for embryonic development. The sequence is that of Puromycin-sensitive aminopeptidase from Caenorhabditis elegans.